A 204-amino-acid polypeptide reads, in one-letter code: Ribonuclease HII (204 aa).

The RNase H type-2 domain maps to 1–197 (MILGIDEAGR…KNRILNPKLL (197 aa)). 3 residues coordinate a divalent metal cation: Asp6, Glu7, and Asp103.

The protein belongs to the RNase HII family. Mn(2+) is required as a cofactor. It depends on Mg(2+) as a cofactor.

The protein resides in the cytoplasm. The enzyme catalyses Endonucleolytic cleavage to 5'-phosphomonoester.. Functionally, endonuclease that specifically degrades the RNA of RNA-DNA hybrids. This Helicobacter pylori (strain Shi470) protein is Ribonuclease HII.